Here is a 274-residue protein sequence, read N- to C-terminus: Exosome complex component Rrp42 (274 aa).

Belongs to the RNase PH family. Rrp42 subfamily. In terms of assembly, component of the archaeal exosome complex. Forms a hexameric ring-like arrangement composed of 3 Rrp41-Rrp42 heterodimers. The hexameric ring associates with a trimer of Rrp4 and/or Csl4 subunits.

It is found in the cytoplasm. Non-catalytic component of the exosome, which is a complex involved in RNA degradation. Contributes to the structuring of the Rrp41 active site. In Pyrococcus horikoshii (strain ATCC 700860 / DSM 12428 / JCM 9974 / NBRC 100139 / OT-3), this protein is Exosome complex component Rrp42.